The chain runs to 477 residues: UDP-N-acetylmuramate--L-alanine ligase (477 aa).

G117–T123 is an ATP binding site.

The protein belongs to the MurCDEF family.

The protein resides in the cytoplasm. It catalyses the reaction UDP-N-acetyl-alpha-D-muramate + L-alanine + ATP = UDP-N-acetyl-alpha-D-muramoyl-L-alanine + ADP + phosphate + H(+). Its pathway is cell wall biogenesis; peptidoglycan biosynthesis. Functionally, cell wall formation. The protein is UDP-N-acetylmuramate--L-alanine ligase of Phenylobacterium zucineum (strain HLK1).